The following is a 280-amino-acid chain: Phosphatidylglycerol--prolipoprotein diacylglyceryl transferase (280 aa).

Transmembrane regions (helical) follow at residues 26-46, 71-91, 106-126, and 132-152; these read LAIHWYGIAYVAGIMLGWFYA, FILWAAGGIVLGGRIGYILFY, IWNGGMSFHGGLIGTTIAMIL, and GIPVWSMFDIIAAVAPIGLLF. Residue Arg154 participates in a 1,2-diacyl-sn-glycero-3-phospho-(1'-sn-glycerol) binding. Transmembrane regions (helical) follow at residues 193 to 213, 217 to 237, and 251 to 271; these read GLEGLVLVVLLAIAIYVFKAL, GTVTGIFVCGYALSRIFVEFF, and WLTMGMVLSTPMFLLGLWAVL.

This sequence belongs to the Lgt family.

It is found in the cell inner membrane. The catalysed reaction is L-cysteinyl-[prolipoprotein] + a 1,2-diacyl-sn-glycero-3-phospho-(1'-sn-glycerol) = an S-1,2-diacyl-sn-glyceryl-L-cysteinyl-[prolipoprotein] + sn-glycerol 1-phosphate + H(+). Its pathway is protein modification; lipoprotein biosynthesis (diacylglyceryl transfer). Functionally, catalyzes the transfer of the diacylglyceryl group from phosphatidylglycerol to the sulfhydryl group of the N-terminal cysteine of a prolipoprotein, the first step in the formation of mature lipoproteins. The polypeptide is Phosphatidylglycerol--prolipoprotein diacylglyceryl transferase (Agrobacterium fabrum (strain C58 / ATCC 33970) (Agrobacterium tumefaciens (strain C58))).